Reading from the N-terminus, the 366-residue chain is tRNA/tmRNA (uracil-C(5))-methyltransferase (366 aa).

Residues Q190, Y218, N223, E239, and D299 each coordinate S-adenosyl-L-methionine. The active-site Nucleophile is C324. E358 acts as the Proton acceptor in catalysis.

This sequence belongs to the class I-like SAM-binding methyltransferase superfamily. RNA M5U methyltransferase family. TrmA subfamily.

The catalysed reaction is uridine(54) in tRNA + S-adenosyl-L-methionine = 5-methyluridine(54) in tRNA + S-adenosyl-L-homocysteine + H(+). It catalyses the reaction uridine(341) in tmRNA + S-adenosyl-L-methionine = 5-methyluridine(341) in tmRNA + S-adenosyl-L-homocysteine + H(+). Its function is as follows. Dual-specificity methyltransferase that catalyzes the formation of 5-methyluridine at position 54 (m5U54) in all tRNAs, and that of position 341 (m5U341) in tmRNA (transfer-mRNA). The protein is tRNA/tmRNA (uracil-C(5))-methyltransferase of Klebsiella pneumoniae (strain 342).